We begin with the raw amino-acid sequence, 432 residues long: Homogentisate 1,2-dioxygenase (432 aa).

Residue H286 is the Proton acceptor of the active site. Fe cation is bound by residues H329 and E335. Residues Y344 and H365 each contribute to the homogentisate site. H365 serves as a coordination point for Fe cation.

The protein belongs to the homogentisate dioxygenase family. In terms of assembly, hexamer; dimer of trimers. The cofactor is Fe cation.

It carries out the reaction homogentisate + O2 = 4-maleylacetoacetate + H(+). The protein operates within amino-acid degradation; L-phenylalanine degradation; acetoacetate and fumarate from L-phenylalanine: step 4/6. In terms of biological role, involved in the catabolism of homogentisate (2,5-dihydroxyphenylacetate or 2,5-OH-PhAc), a central intermediate in the degradation of phenylalanine and tyrosine. Catalyzes the oxidative ring cleavage of the aromatic ring of homogentisate to yield maleylacetoacetate. This is Homogentisate 1,2-dioxygenase from Bordetella petrii (strain ATCC BAA-461 / DSM 12804 / CCUG 43448).